Reading from the N-terminus, the 72-residue chain is Metallothionein-like protein type 2 (72 aa).

Belongs to the metallothionein superfamily. Type 15 family.

In terms of biological role, metallothioneins have a high content of cysteine residues that bind various heavy metals. This is Metallothionein-like protein type 2 from Solanum lycopersicum (Tomato).